We begin with the raw amino-acid sequence, 474 residues long: MSSSLWLQCLQRLQEELPATEFSMWVRPLQAELKDNTLTLFAPNRFVLDWVRDKYLNNINRLLNEFCGTDIPILRFEVGSRQVVVPSSQIIAPAAPAVTLAPRPLPATRILQDDAPSRSWEPAPSPVQPESKSGYRSNVNPKHNFNNFVEGKSNQLGLAACRQVSDNPGAAYNPLFLYGGTGLGKTHLLHAVGNAIADRKPNARVVYMHSERFVQDMVKALQNNAIEEFKRYYRSVDALLIDDIQFFANKERSQEEFFHTFNALLEGNQQIILTSDRYPREINGVEDRLKSRFGWGLTVAIEPPELETRVAILMKKAENHNIRLPDEVAFFIAKRLRSNVRELEGALNRVIANANFTGRAITIDFVREALRDLLALQEKLVTIDNIQKTVAEYYKIKMSDMLSKRRSRSVARPRQMAMALAKELTNHSLPEIGDAFGGRDHTTVLHACRKIVQLREESHDIKEDYSNLIRTLST.

Positions 1–90 (MSSSLWLQCL…RQVVVPSSQI (90 aa)) are domain I, interacts with DnaA modulators. The domain II stretch occupies residues 91 to 137 (IAPAAPAVTLAPRPLPATRILQDDAPSRSWEPAPSPVQPESKSGYRS). Positions 112–137 (QDDAPSRSWEPAPSPVQPESKSGYRS) are disordered. Residues 128–137 (QPESKSGYRS) are compositionally biased toward polar residues. A domain III, AAA+ region region spans residues 138-354 (NVNPKHNFNN…GALNRVIANA (217 aa)). ATP-binding residues include Gly-182, Gly-184, Lys-185, and Thr-186. Positions 355 to 474 (NFTGRAITID…YSNLIRTLST (120 aa)) are domain IV, binds dsDNA.

The protein belongs to the DnaA family. Oligomerizes as a right-handed, spiral filament on DNA at oriC.

It localises to the cytoplasm. Plays an essential role in the initiation and regulation of chromosomal replication. ATP-DnaA binds to the origin of replication (oriC) to initiate formation of the DNA replication initiation complex once per cell cycle. Binds the DnaA box (a 9 base pair repeat at the origin) and separates the double-stranded (ds)DNA. Forms a right-handed helical filament on oriC DNA; dsDNA binds to the exterior of the filament while single-stranded (ss)DNA is stabiized in the filament's interior. The ATP-DnaA-oriC complex binds and stabilizes one strand of the AT-rich DNA unwinding element (DUE), permitting loading of DNA polymerase. After initiation quickly degrades to an ADP-DnaA complex that is not apt for DNA replication. Binds acidic phospholipids. The protein is Chromosomal replication initiator protein DnaA of Photobacterium profundum (strain SS9).